The sequence spans 191 residues: Protein GrpE (191 aa).

The segment covering 1 to 14 has biased composition (polar residues); it reads MEDQKQTPSNQTAT. The interval 1–35 is disordered; it reads MEDQKQTPSNQTATPAGDEATSTAAASPETGAPDT. Low complexity predominate over residues 19–35; the sequence is EATSTAAASPETGAPDT.

This sequence belongs to the GrpE family. As to quaternary structure, homodimer.

The protein localises to the cytoplasm. Participates actively in the response to hyperosmotic and heat shock by preventing the aggregation of stress-denatured proteins, in association with DnaK and GrpE. It is the nucleotide exchange factor for DnaK and may function as a thermosensor. Unfolded proteins bind initially to DnaJ; upon interaction with the DnaJ-bound protein, DnaK hydrolyzes its bound ATP, resulting in the formation of a stable complex. GrpE releases ADP from DnaK; ATP binding to DnaK triggers the release of the substrate protein, thus completing the reaction cycle. Several rounds of ATP-dependent interactions between DnaJ, DnaK and GrpE are required for fully efficient folding. This Cupriavidus taiwanensis (strain DSM 17343 / BCRC 17206 / CCUG 44338 / CIP 107171 / LMG 19424 / R1) (Ralstonia taiwanensis (strain LMG 19424)) protein is Protein GrpE.